The primary structure comprises 275 residues: 4-diphosphocytidyl-2-C-methyl-D-erythritol kinase (275 aa).

Lys9 is an active-site residue. An ATP-binding site is contributed by Pro90–Ser100. Asp132 is an active-site residue.

The protein belongs to the GHMP kinase family. IspE subfamily.

The enzyme catalyses 4-CDP-2-C-methyl-D-erythritol + ATP = 4-CDP-2-C-methyl-D-erythritol 2-phosphate + ADP + H(+). The protein operates within isoprenoid biosynthesis; isopentenyl diphosphate biosynthesis via DXP pathway; isopentenyl diphosphate from 1-deoxy-D-xylulose 5-phosphate: step 3/6. Functionally, catalyzes the phosphorylation of the position 2 hydroxy group of 4-diphosphocytidyl-2C-methyl-D-erythritol. The polypeptide is 4-diphosphocytidyl-2-C-methyl-D-erythritol kinase (Sulfurihydrogenibium sp. (strain YO3AOP1)).